Consider the following 127-residue polypeptide: Holo-[acyl-carrier-protein] synthase (127 aa).

Residues aspartate 7 and glutamate 56 each coordinate Mg(2+).

This sequence belongs to the P-Pant transferase superfamily. AcpS family. It depends on Mg(2+) as a cofactor.

It is found in the cytoplasm. It carries out the reaction apo-[ACP] + CoA = holo-[ACP] + adenosine 3',5'-bisphosphate + H(+). Transfers the 4'-phosphopantetheine moiety from coenzyme A to a Ser of acyl-carrier-protein. This is Holo-[acyl-carrier-protein] synthase from Leptospira biflexa serovar Patoc (strain Patoc 1 / Ames).